The following is a 353-amino-acid chain: MRLPRRAALGLLPLLLLLPPAPEAAKKPTPCHRCRGLVDKFNQGMVDTAKKNFGGGNTAWEEKTLSKYESSEIRLLEILEGLCESSDFECNQMLEAQEEHLEAWWLQLKSEYPDLFEWFCVKTLKVCCSPGTYGPDCLACQGGSQRPCSGNGHCSGDGSRQGDGSCRCHMGYQGPLCTDCMDGYFSSLRNETHSICTACDESCKTCSGLTNRDCGECEVGWVLDEGACVDVDECAAEPPPCSAAQFCKNANGSYTCEECDSSCVGCTGEGPGNCKECISGYAREHGQCADVDECSLAEKTCVRKNENCYNTPGSYVCVCPDGFEETEDACVPPAEAEATEGESPTQLPSREDL.

A signal peptide spans Met1–Ala24. Positions Cys31 to Cys34 match the CXXC motif. Intrachain disulfides connect Cys31–Cys34, Cys140–Cys154, Cys148–Cys166, and Cys168–Cys177. Residues Asp136–Thr178 form the EGF-like 1 domain. The stretch at His193–Pro240 is one FU 1 repeat. Residue Asn251 is glycosylated (N-linked (GlcNAc...) asparagine). The FU 2 repeat unit spans residues Ser253–Val302. The CXXC signature appears at Cys263–Cys266. Intrachain disulfides connect Cys263–Cys266, Cys294–Cys308, Cys301–Cys317, and Cys319–Cys330. One can recognise an EGF-like 2; calcium-binding domain in the interval Asp290–Val331. The interval Pro332–Leu353 is disordered. Residues Glu342–Leu353 show a composition bias toward polar residues.

This sequence belongs to the CRELD family. As to quaternary structure, interacts with CHRNA4. Component of a complex containing at least CRELD2, MANF, MATN3 and PDIA4. In terms of tissue distribution, ubiquitously expressed. Highly expressed in skeletal muscle, heart, liver, kidney and placenta.

The protein localises to the endoplasmic reticulum. It carries out the reaction Catalyzes the rearrangement of -S-S- bonds in proteins.. In terms of biological role, protein disulfide isomerase. Might play a role in the unfolded protein response. May regulate transport of alpha4-beta2 neuronal acetylcholine receptor. The protein is Protein disulfide isomerase CRELD2 (CRELD2) of Homo sapiens (Human).